The sequence spans 225 residues: Sugar fermentation stimulation protein homolog (225 aa).

Belongs to the SfsA family.

This is Sugar fermentation stimulation protein homolog from Sulfolobus acidocaldarius (strain ATCC 33909 / DSM 639 / JCM 8929 / NBRC 15157 / NCIMB 11770).